The primary structure comprises 85 residues: F1845 adhesin operon regulatory protein (85 aa).

Regulates the transcription of genes involved in the biosynthesis of F1845 fimbrial adhesin. The sequence is that of F1845 adhesin operon regulatory protein (daaA) from Escherichia coli.